Reading from the N-terminus, the 473-residue chain is PPE family protein PPE37 (473 aa).

The Iron-binding motif motif lies at 203–206; sequence DFLE. The next 2 helical transmembrane spans lie at 227–247 and 250–270; these read VLDW…AYLV and PLIY…PAGL.

The protein belongs to the mycobacterial PPE family.

Its subcellular location is the cell membrane. Essential for efficient heme-iron acquisition (HIA). Binds iron. Strains with a functional PPE37 can utilize low concentrations of hemin very efficiently in broth and on agar plates. During infection, might interfere with the pro-inflammatory cytokine response in infected macrophages. Functionally, in vitro, incubation of the protein in the presence of M.tuberculosis proteases leads to the cleavage of PPE37 into two segments, the N- and C-terminal segments. Transfection of human monocytic THP-1 cell lines with the N-terminal segment leads to the proliferation and differentiation of THP-1 cells into adherent stellate cells with dendritic cell-like morphology. Transfection of THP-1 cells with the C-terminal segment leads to the apoptosis of the cells. Recombinant protein antigens display strong B-cell response in tuberculosis patients and immunized mice. This is PPE family protein PPE37 from Mycobacterium tuberculosis (strain ATCC 25618 / H37Rv).